Consider the following 136-residue polypeptide: Transcription antitermination protein NusB (136 aa).

The protein belongs to the NusB family.

Functionally, involved in transcription antitermination. Required for transcription of ribosomal RNA (rRNA) genes. Binds specifically to the boxA antiterminator sequence of the ribosomal RNA (rrn) operons. This is Transcription antitermination protein NusB from Pseudarthrobacter chlorophenolicus (strain ATCC 700700 / DSM 12829 / CIP 107037 / JCM 12360 / KCTC 9906 / NCIMB 13794 / A6) (Arthrobacter chlorophenolicus).